A 292-amino-acid chain; its full sequence is GTP cyclohydrolase FolE2 (292 aa).

This sequence belongs to the GTP cyclohydrolase IV family.

The enzyme catalyses GTP + H2O = 7,8-dihydroneopterin 3'-triphosphate + formate + H(+). It functions in the pathway cofactor biosynthesis; 7,8-dihydroneopterin triphosphate biosynthesis; 7,8-dihydroneopterin triphosphate from GTP: step 1/1. In terms of biological role, converts GTP to 7,8-dihydroneopterin triphosphate. The protein is GTP cyclohydrolase FolE2 of Staphylococcus aureus (strain Mu50 / ATCC 700699).